The primary structure comprises 32 residues: Conotoxin pr6d (32 aa).

P5 bears the 4-hydroxyproline mark. Intrachain disulfides connect C7–C20, C14–C25, and C19–C30.

Expressed by the venom duct.

The protein resides in the secreted. In Conus parius (Cone snail), this protein is Conotoxin pr6d.